Reading from the N-terminus, the 247-residue chain is Probable transcriptional regulatory protein GM21_0933 (247 aa).

The protein belongs to the TACO1 family.

It is found in the cytoplasm. In Geobacter sp. (strain M21), this protein is Probable transcriptional regulatory protein GM21_0933.